The sequence spans 488 residues: Bifunctional protein GlmU (488 aa).

Residues 1-237 (MPRTRTPLAA…VEEASGVNDR (237 aa)) form a pyrophosphorylase region. UDP-N-acetyl-alpha-D-glucosamine contacts are provided by residues 13–16 (LAAG), Lys27, Gln82, 87–88 (GT), 110–112 (SGD), Gly149, Glu164, Asn179, and Asn235. Residue Asp112 coordinates Mg(2+). Asn235 provides a ligand contact to Mg(2+). Positions 238–258 (VELSRANRVMVGRLAEAFMRA) are linker. The interval 259 to 488 (GVTIEDPARF…KGRPAARRAS (230 aa)) is N-acetyltransferase. UDP-N-acetyl-alpha-D-glucosamine is bound by residues Arg341 and Lys359. His371 functions as the Proton acceptor in the catalytic mechanism. Residues Tyr374 and Asn385 each coordinate UDP-N-acetyl-alpha-D-glucosamine. Acetyl-CoA-binding positions include Ala388, 394–395 (NY), Ser413, Ala431, and Arg448. The segment at 459 to 488 (AQRQAEKQMKGTATGPASARKGRPAARRAS) is disordered. The segment covering 478–488 (RKGRPAARRAS) has biased composition (basic residues).

The protein in the N-terminal section; belongs to the N-acetylglucosamine-1-phosphate uridyltransferase family. It in the C-terminal section; belongs to the transferase hexapeptide repeat family. As to quaternary structure, homotrimer. Mg(2+) serves as cofactor.

Its subcellular location is the cytoplasm. The enzyme catalyses alpha-D-glucosamine 1-phosphate + acetyl-CoA = N-acetyl-alpha-D-glucosamine 1-phosphate + CoA + H(+). It catalyses the reaction N-acetyl-alpha-D-glucosamine 1-phosphate + UTP + H(+) = UDP-N-acetyl-alpha-D-glucosamine + diphosphate. It functions in the pathway nucleotide-sugar biosynthesis; UDP-N-acetyl-alpha-D-glucosamine biosynthesis; N-acetyl-alpha-D-glucosamine 1-phosphate from alpha-D-glucosamine 6-phosphate (route II): step 2/2. The protein operates within nucleotide-sugar biosynthesis; UDP-N-acetyl-alpha-D-glucosamine biosynthesis; UDP-N-acetyl-alpha-D-glucosamine from N-acetyl-alpha-D-glucosamine 1-phosphate: step 1/1. It participates in bacterial outer membrane biogenesis; LPS lipid A biosynthesis. Functionally, catalyzes the last two sequential reactions in the de novo biosynthetic pathway for UDP-N-acetylglucosamine (UDP-GlcNAc). The C-terminal domain catalyzes the transfer of acetyl group from acetyl coenzyme A to glucosamine-1-phosphate (GlcN-1-P) to produce N-acetylglucosamine-1-phosphate (GlcNAc-1-P), which is converted into UDP-GlcNAc by the transfer of uridine 5-monophosphate (from uridine 5-triphosphate), a reaction catalyzed by the N-terminal domain. This chain is Bifunctional protein GlmU, found in Anaeromyxobacter sp. (strain K).